The following is a 263-amino-acid chain: Acyl-[acyl-carrier-protein]--UDP-N-acetylglucosamine O-acyltransferase (263 aa).

It belongs to the transferase hexapeptide repeat family. LpxA subfamily. Homotrimer.

It is found in the cytoplasm. It carries out the reaction a (3R)-hydroxyacyl-[ACP] + UDP-N-acetyl-alpha-D-glucosamine = a UDP-3-O-[(3R)-3-hydroxyacyl]-N-acetyl-alpha-D-glucosamine + holo-[ACP]. The protein operates within glycolipid biosynthesis; lipid IV(A) biosynthesis; lipid IV(A) from (3R)-3-hydroxytetradecanoyl-[acyl-carrier-protein] and UDP-N-acetyl-alpha-D-glucosamine: step 1/6. In terms of biological role, involved in the biosynthesis of lipid A, a phosphorylated glycolipid that anchors the lipopolysaccharide to the outer membrane of the cell. The sequence is that of Acyl-[acyl-carrier-protein]--UDP-N-acetylglucosamine O-acyltransferase from Campylobacter jejuni subsp. jejuni serotype O:2 (strain ATCC 700819 / NCTC 11168).